The sequence spans 705 residues: Polyribonucleotide nucleotidyltransferase (705 aa).

Positions 486 and 492 each coordinate Mg(2+). In terms of domain architecture, KH spans 553–612 (PRIYTMKINPEKIKDVIGKGGSVIRALTDETGTTIEIEDDGTIKIAATDGDKAKHAIRRI). The S1 motif domain occupies 622–690 (GRIYAGKVTR…RQGRIRLSIK (69 aa)).

It belongs to the polyribonucleotide nucleotidyltransferase family. As to quaternary structure, component of the RNA degradosome, which is a multiprotein complex involved in RNA processing and mRNA degradation. The cofactor is Mg(2+).

Its subcellular location is the cytoplasm. The enzyme catalyses RNA(n+1) + phosphate = RNA(n) + a ribonucleoside 5'-diphosphate. Involved in mRNA degradation. Catalyzes the phosphorolysis of single-stranded polyribonucleotides processively in the 3'- to 5'-direction. The chain is Polyribonucleotide nucleotidyltransferase from Yersinia pseudotuberculosis serotype O:3 (strain YPIII).